A 235-amino-acid chain; its full sequence is Small ribosomal subunit protein uS2c (235 aa).

The protein belongs to the universal ribosomal protein uS2 family.

It localises to the plastid. Its subcellular location is the chloroplast. The sequence is that of Small ribosomal subunit protein uS2c (rps2) from Anthoceros angustus (Hornwort).